We begin with the raw amino-acid sequence, 152 residues long: Xanthine-guanine phosphoribosyltransferase (152 aa).

5-phospho-alpha-D-ribose 1-diphosphate-binding positions include 37–38, R69, and 88–96; these read RG and DDLVDTGGT. R69 provides a ligand contact to GMP. D89 is a binding site for Mg(2+). 2 residues coordinate guanine: D92 and I135. Xanthine-binding residues include D92 and I135. GMP is bound by residues 92–96 and 134–135; these read DTGGT and WI.

This sequence belongs to the purine/pyrimidine phosphoribosyltransferase family. XGPT subfamily. As to quaternary structure, homotetramer. The cofactor is Mg(2+).

The protein resides in the cell inner membrane. It catalyses the reaction GMP + diphosphate = guanine + 5-phospho-alpha-D-ribose 1-diphosphate. The catalysed reaction is XMP + diphosphate = xanthine + 5-phospho-alpha-D-ribose 1-diphosphate. It carries out the reaction IMP + diphosphate = hypoxanthine + 5-phospho-alpha-D-ribose 1-diphosphate. Its pathway is purine metabolism; GMP biosynthesis via salvage pathway; GMP from guanine: step 1/1. It functions in the pathway purine metabolism; XMP biosynthesis via salvage pathway; XMP from xanthine: step 1/1. Purine salvage pathway enzyme that catalyzes the transfer of the ribosyl-5-phosphate group from 5-phospho-alpha-D-ribose 1-diphosphate (PRPP) to the N9 position of the 6-oxopurines guanine and xanthine to form the corresponding ribonucleotides GMP (guanosine 5'-monophosphate) and XMP (xanthosine 5'-monophosphate), with the release of PPi. To a lesser extent, also acts on hypoxanthine. In Escherichia coli O7:K1 (strain IAI39 / ExPEC), this protein is Xanthine-guanine phosphoribosyltransferase.